Consider the following 421-residue polypeptide: Serine--tRNA ligase (421 aa).

229–231 lines the L-serine pocket; it reads TAE. 260–262 provides a ligand contact to ATP; that stretch reads RAE. Glutamate 283 lines the L-serine pocket. 347 to 350 contributes to the ATP binding site; the sequence is EISS. Serine 383 is an L-serine binding site.

The protein belongs to the class-II aminoacyl-tRNA synthetase family. Type-1 seryl-tRNA synthetase subfamily. Homodimer. The tRNA molecule binds across the dimer.

Its subcellular location is the cytoplasm. The enzyme catalyses tRNA(Ser) + L-serine + ATP = L-seryl-tRNA(Ser) + AMP + diphosphate + H(+). The catalysed reaction is tRNA(Sec) + L-serine + ATP = L-seryl-tRNA(Sec) + AMP + diphosphate + H(+). The protein operates within aminoacyl-tRNA biosynthesis; selenocysteinyl-tRNA(Sec) biosynthesis; L-seryl-tRNA(Sec) from L-serine and tRNA(Sec): step 1/1. Catalyzes the attachment of serine to tRNA(Ser). Is also able to aminoacylate tRNA(Sec) with serine, to form the misacylated tRNA L-seryl-tRNA(Sec), which will be further converted into selenocysteinyl-tRNA(Sec). The protein is Serine--tRNA ligase of Desulfitobacterium hafniense (strain DSM 10664 / DCB-2).